We begin with the raw amino-acid sequence, 679 residues long: MPSEVTPKVPERPSRRKTSELFPLSGSESGDIKANSEPPTPAGTPNVPTRRPILKAKTMTSFESGMDQESLPKVPLQRPVRRSTTEELNNVMNNTSKELEEIESLISKHNIHNVSRKKSPTSVEEGKVAAIHQNGQRSASDNKTSTNPSPLEKNEHEGAEGNESAISPSNLVNKSNNEVTEHSDSEDLTEKQKVHAALDNEAGDRSHFEEKLIPGDMKVQVDVSKDVEEGSLNALPPSGITESDDKAEKFTKHPESSLEELQKHQEQQEEKIFQNPTDEESTTSLNEKQEGKDNMEVNSQPQGPSDTETVIAATSSNVPSQIASEEENDVPVIPRSRPKKDFEAHVQKEELPNTQEKRVSEECDSTLISTEEESKIPKIPSERPKRRAPPPVPKKPSSRIAAFQEMLQKQQQQDLHNNGNSSATTASADIAKKHTDSSITSDTTKADFTSKLNGLFALPGMVNPGQLPPSLEKKLSSPDTESKLGPQDQSQAKTGPLGGTRRGRGPRGRKLPSKVASVEKIEEDDNTNKIEIFNNWNVSSSFSKEKVLIDTTPGEQAERALDEKSKSIPEEQREQSPNKMEAALCPFELDEKEKLPANAESDPLSQLPQTNAVGNRKAISEESLSPSEAIANRDQNDTTEIQEQQMEDQMEVDMERELSGGYEDVDSALHSEEASFHSL.

The tract at residues 1–85 (MPSEVTPKVP…LQRPVRRSTT (85 aa)) is disordered. Positions 9–19 (VPERPSRRKTS) are enriched in basic and acidic residues. A Phosphothreonine modification is found at Thr-18. Ser-36 bears the Phosphoserine mark. A Phosphothreonine modification is found at Thr-58. Ser-70 bears the Phosphoserine mark. Position 85 is a phosphothreonine (Thr-85). Ser-104 is modified (phosphoserine). The span at 110–119 (NIHNVSRKKS) shows a compositional bias: basic residues. Disordered regions lie at residues 110–522 (NIHN…EKIE), 549–580 (IDTT…PNKM), and 593–679 (EKLP…FHSL). 2 stretches are compositionally biased toward polar residues: residues 133–149 (QNGQ…TNPS) and 164–178 (SAIS…SNNE). A compositionally biased stretch (basic and acidic residues) spans 179-213 (VTEHSDSEDLTEKQKVHAALDNEAGDRSHFEEKLI). A phosphoserine mark is found at Ser-183, Ser-206, and Ser-231. Positions 243 to 272 (SDDKAEKFTKHPESSLEELQKHQEQQEEKI) are enriched in basic and acidic residues. Thr-277 is modified (phosphothreonine). At Ser-284 the chain carries Phosphoserine. Residues 296-323 (EVNSQPQGPSDTETVIAATSSNVPSQIA) show a composition bias toward polar residues. Position 324 is a phosphoserine (Ser-324). Basic and acidic residues-rich tracts occupy residues 339–361 (KKDF…RVSE) and 372–383 (EESKIPKIPSER). The tract at residues 383–396 (RPKRRAPPPVPKKP) is interaction with SH3 domain of ABP1. Composition is skewed to polar residues over residues 414-427 (DLHN…TTAS) and 437-452 (SSIT…TSKL). A compositionally biased stretch (basic and acidic residues) spans 471 to 482 (LEKKLSSPDTES). The segment covering 501-512 (RRGRGPRGRKLP) has biased composition (basic residues). Position 552 is a phosphothreonine (Thr-552). The segment covering 556 to 576 (QAERALDEKSKSIPEEQREQS) has biased composition (basic and acidic residues). The residue at position 576 (Ser-576) is a Phosphoserine. A compositionally biased stretch (polar residues) spans 603 to 613 (PLSQLPQTNAV). Residues Ser-620, Ser-623, Ser-625, Ser-627, Ser-667, Ser-671, Ser-675, and Ser-678 each carry the phosphoserine modification. A compositionally biased stretch (basic and acidic residues) spans 667 to 679 (SALHSEEASFHSL).

Belongs to the AIM21 family. In terms of assembly, interacts with ribosomes. Interacts with ABP1.

It is found in the cytoplasm. It localises to the cytoskeleton. The protein localises to the actin patch. Involved in mitochondrial migration along actin filaments. This Saccharomyces cerevisiae (strain ATCC 204508 / S288c) (Baker's yeast) protein is Altered inheritance of mitochondria protein 21 (AIM21).